The primary structure comprises 174 residues: Chorion protein S18 (174 aa).

An N-terminal signal peptide occupies residues Met1 to Ala17. Residues Ala154 to Ala165 are compositionally biased toward low complexity. Residues Ala154–Tyr174 form a disordered region.

It belongs to the chorion protein S15/S18 family.

It is found in the secreted. Chorion membrane (egg shell) protein; plays a role in protecting the egg from the environment. This is Chorion protein S18 (Cp18) from Drosophila subobscura (Fruit fly).